A 78-amino-acid polypeptide reads, in one-letter code: Acyl carrier protein (78 aa).

One can recognise a Carrier domain in the interval 2-77 (STIEERVKKI…AAIDYINGHQ (76 aa)). Serine 37 bears the O-(pantetheine 4'-phosphoryl)serine mark.

This sequence belongs to the acyl carrier protein (ACP) family. 4'-phosphopantetheine is transferred from CoA to a specific serine of apo-ACP by AcpS. This modification is essential for activity because fatty acids are bound in thioester linkage to the sulfhydryl of the prosthetic group.

It localises to the cytoplasm. Its pathway is lipid metabolism; fatty acid biosynthesis. Its function is as follows. Carrier of the growing fatty acid chain in fatty acid biosynthesis. This chain is Acyl carrier protein, found in Shigella flexneri.